Consider the following 154-residue polypeptide: MAKKNTYSYQPKADEKIAKAAGHSLKISPKHSVEICRTIRNMYLEDAKAFLEDVIAKKTVVPFKRHNKKVGHRSDLKGWPSGRYPVKAAAAILKVLENAEANAENEELDVENLKLVHVCANRGVIIRGWTPRAFGRASPSNTPTTHIQIVLGEA.

Belongs to the universal ribosomal protein uL22 family. In terms of assembly, part of the 50S ribosomal subunit.

Its function is as follows. This protein binds specifically to 23S rRNA. It makes multiple contacts with different domains of the 23S rRNA in the assembled 50S subunit and ribosome. The globular domain of the protein is located near the polypeptide exit tunnel on the outside of the subunit, while an extended beta-hairpin is found that lines the wall of the exit tunnel in the center of the 70S ribosome. The polypeptide is Large ribosomal subunit protein uL22 (Methanosphaera stadtmanae (strain ATCC 43021 / DSM 3091 / JCM 11832 / MCB-3)).